Reading from the N-terminus, the 271-residue chain is Pyrroline-5-carboxylate reductase (271 aa).

This sequence belongs to the pyrroline-5-carboxylate reductase family.

It localises to the cytoplasm. The catalysed reaction is L-proline + NADP(+) = (S)-1-pyrroline-5-carboxylate + NADPH + 2 H(+). The enzyme catalyses L-proline + NAD(+) = (S)-1-pyrroline-5-carboxylate + NADH + 2 H(+). It participates in amino-acid biosynthesis; L-proline biosynthesis; L-proline from L-glutamate 5-semialdehyde: step 1/1. Its function is as follows. Catalyzes the reduction of 1-pyrroline-5-carboxylate (PCA) to L-proline. The sequence is that of Pyrroline-5-carboxylate reductase from Staphylococcus aureus (strain COL).